We begin with the raw amino-acid sequence, 305 residues long: RxLR effector protein PexRD25 (305 aa).

The N-terminal stretch at 1-16 (MRFLFYMLLACSAVVA) is a signal peptide. The RxLR-dEER motif lies at 44 to 56 (RLLRDRRSVDEER).

It belongs to the RxLR effector family.

It is found in the secreted. The protein resides in the host nucleus. It localises to the host nucleolus. Its function is as follows. Effector that enhances P.infestans colonization of Nicotiana benthamiana leaves. In Phytophthora infestans (strain T30-4) (Potato late blight agent), this protein is RxLR effector protein PexRD25.